The primary structure comprises 380 residues: UPF0754 membrane protein Bsph_0374 (380 aa).

2 helical membrane-spanning segments follow: residues 1–21 (MDNF…IGGV) and 357–377 (MITV…GLIV).

The protein belongs to the UPF0754 family.

It is found in the cell membrane. This is UPF0754 membrane protein Bsph_0374 from Lysinibacillus sphaericus (strain C3-41).